We begin with the raw amino-acid sequence, 243 residues long: Uridylate kinase (243 aa).

14–17 (KLSG) serves as a coordination point for ATP. G57 is a UMP binding site. The ATP site is built by G58 and R62. UMP contacts are provided by residues D77 and 139-146 (TGRPYFTT). The ATP site is built by N167, Y173, and D176.

Belongs to the UMP kinase family. In terms of assembly, homohexamer.

The protein resides in the cytoplasm. It catalyses the reaction UMP + ATP = UDP + ADP. It functions in the pathway pyrimidine metabolism; CTP biosynthesis via de novo pathway; UDP from UMP (UMPK route): step 1/1. With respect to regulation, inhibited by UTP. Catalyzes the reversible phosphorylation of UMP to UDP. This Mycoplasmopsis pulmonis (strain UAB CTIP) (Mycoplasma pulmonis) protein is Uridylate kinase.